The primary structure comprises 367 residues: Pentatricopeptide repeat-containing protein At1g11900 (367 aa).

8 PPR repeats span residues 69 to 103 (SKID…NICL), 104 to 139 (PISV…GKEP), 141 to 175 (SSDC…SLPY), 176 to 210 (RLIV…ECKP), 211 to 241 (DVIT…MKED), 247 to 281 (NIIT…GIEP), 282 to 316 (DLLS…QIRP), and 317 to 347 (SVYV…LKNT).

It belongs to the PPR family. P subfamily.

This Arabidopsis thaliana (Mouse-ear cress) protein is Pentatricopeptide repeat-containing protein At1g11900.